The following is a 473-amino-acid chain: Rifampicin monooxygenase (473 aa).

FAD contacts are provided by Thr-12, Glu-31, Lys-32, and Arg-41. Residue Arg-43 participates in rifampicin binding. FAD-binding residues include Gln-98, Val-122, and Thr-156. Residue Arg-196 participates in rifampicin binding. Asp-276 is a binding site for FAD. Gly-285 contacts rifampicin. 2 residues coordinate FAD: Leu-289 and Asn-290.

The protein belongs to the rifampicin monooxygenase family. Homodimer. The cofactor is FAD.

It catalyses the reaction rifampicin + NADPH + O2 = rifampicin para-naphthoquinone carboxamide + NADP(+) + H2O + H(+). The catalysed reaction is rifampicin + NADH + O2 = rifampicin para-naphthoquinone carboxamide + NAD(+) + H2O + H(+). In terms of biological role, monooxygenase that can modify rifampicin, thereby inactivating its antibiotic activity. It constitutes a secondary rifampicin resistance factor. The chain is Rifampicin monooxygenase from Nocardia farcinica (strain IFM 10152).